A 474-amino-acid polypeptide reads, in one-letter code: Aspartyl protease family protein At5g10770 (474 aa).

Residues 1–25 form the signal peptide; that stretch reads MSINRNLLNIIIILCICLNLGCNDG. One can recognise a Peptidase A1 domain in the interval 132-469; sequence YIVTVGLGTP…DGAGGRVGFA (338 aa). Active-site residues include Asp150 and Asp352. The cysteines at positions 391 and 432 are disulfide-linked. A lipid anchor (GPI-anchor amidated asparagine) is attached at Asn443. A propeptide spans 444 to 474 (removed in mature form); sequence AAIFGNVQQQTLEVVYDGAGGRVGFAPNGCS.

The protein belongs to the peptidase A1 family.

The protein resides in the cell membrane. In terms of biological role, probably not redundant with AED1 and not involved in restriction of salicylic acid (SA) or systemic acquired resistance (SAR) signaling. This chain is Aspartyl protease family protein At5g10770, found in Arabidopsis thaliana (Mouse-ear cress).